Reading from the N-terminus, the 373-residue chain is Chaperone protein DnaJ (373 aa).

In terms of domain architecture, J spans 4 to 69; that stretch reads NYYEILEISQ…EKRSIYDRYG (66 aa). The segment at 133–210 adopts a CR-type zinc-finger fold; it reads GCKKKIDFSY…CHGNGYEEIK (78 aa). The Zn(2+) site is built by Cys146, Cys149, Cys162, Cys165, Cys184, Cys187, Cys198, and Cys201. CXXCXGXG motif repeat units lie at residues 146–153, 162–169, 184–191, and 198–205; these read CKSCKGSG, CPHCGGKG, CDHCKGSG, and CKTCHGNG.

It belongs to the DnaJ family. As to quaternary structure, homodimer. Zn(2+) is required as a cofactor.

It is found in the cytoplasm. Its function is as follows. Participates actively in the response to hyperosmotic and heat shock by preventing the aggregation of stress-denatured proteins and by disaggregating proteins, also in an autonomous, DnaK-independent fashion. Unfolded proteins bind initially to DnaJ; upon interaction with the DnaJ-bound protein, DnaK hydrolyzes its bound ATP, resulting in the formation of a stable complex. GrpE releases ADP from DnaK; ATP binding to DnaK triggers the release of the substrate protein, thus completing the reaction cycle. Several rounds of ATP-dependent interactions between DnaJ, DnaK and GrpE are required for fully efficient folding. Also involved, together with DnaK and GrpE, in the DNA replication of plasmids through activation of initiation proteins. The sequence is that of Chaperone protein DnaJ from Campylobacter lari (strain RM2100 / D67 / ATCC BAA-1060).